Reading from the N-terminus, the 343-residue chain is Holliday junction branch migration complex subunit RuvB (343 aa).

A disordered region spans residues 1–20 (MEEMASRMISGDPELGEPFQ). The segment at 1–185 (MEEMASRMIS…FGILARMQFY (185 aa)) is large ATPase domain (RuvB-L). ATP-binding positions include Leu-24, Arg-25, Gly-66, Lys-69, Thr-70, Thr-71, 132–134 (EDF), Arg-175, Tyr-185, and Arg-222. Thr-70 serves as a coordination point for Mg(2+). The interval 186-256 (EPDELQQIVT…LADRALLALE (71 aa)) is small ATPAse domain (RuvB-S). The tract at residues 259 to 343 (RNGLDNMDHR…PRPVQQGTLL (85 aa)) is head domain (RuvB-H). The DNA site is built by Arg-295, Arg-314, and Arg-319.

It belongs to the RuvB family. Homohexamer. Forms an RuvA(8)-RuvB(12)-Holliday junction (HJ) complex. HJ DNA is sandwiched between 2 RuvA tetramers; dsDNA enters through RuvA and exits via RuvB. An RuvB hexamer assembles on each DNA strand where it exits the tetramer. Each RuvB hexamer is contacted by two RuvA subunits (via domain III) on 2 adjacent RuvB subunits; this complex drives branch migration. In the full resolvosome a probable DNA-RuvA(4)-RuvB(12)-RuvC(2) complex forms which resolves the HJ.

Its subcellular location is the cytoplasm. The catalysed reaction is ATP + H2O = ADP + phosphate + H(+). Its function is as follows. The RuvA-RuvB-RuvC complex processes Holliday junction (HJ) DNA during genetic recombination and DNA repair, while the RuvA-RuvB complex plays an important role in the rescue of blocked DNA replication forks via replication fork reversal (RFR). RuvA specifically binds to HJ cruciform DNA, conferring on it an open structure. The RuvB hexamer acts as an ATP-dependent pump, pulling dsDNA into and through the RuvAB complex. RuvB forms 2 homohexamers on either side of HJ DNA bound by 1 or 2 RuvA tetramers; 4 subunits per hexamer contact DNA at a time. Coordinated motions by a converter formed by DNA-disengaged RuvB subunits stimulates ATP hydrolysis and nucleotide exchange. Immobilization of the converter enables RuvB to convert the ATP-contained energy into a lever motion, pulling 2 nucleotides of DNA out of the RuvA tetramer per ATP hydrolyzed, thus driving DNA branch migration. The RuvB motors rotate together with the DNA substrate, which together with the progressing nucleotide cycle form the mechanistic basis for DNA recombination by continuous HJ branch migration. Branch migration allows RuvC to scan DNA until it finds its consensus sequence, where it cleaves and resolves cruciform DNA. This is Holliday junction branch migration complex subunit RuvB from Magnetococcus marinus (strain ATCC BAA-1437 / JCM 17883 / MC-1).